A 218-amino-acid polypeptide reads, in one-letter code: Probable septum site-determining protein MinC (218 aa).

The protein belongs to the MinC family. In terms of assembly, interacts with MinD and FtsZ.

Cell division inhibitor that blocks the formation of polar Z ring septums. Rapidly oscillates between the poles of the cell to destabilize FtsZ filaments that have formed before they mature into polar Z rings. Prevents FtsZ polymerization. The protein is Probable septum site-determining protein MinC of Moorella thermoacetica (strain ATCC 39073 / JCM 9320).